Reading from the N-terminus, the 156-residue chain is Transmembrane inner ear expressed protein (156 aa).

The signal sequence occupies residues 1–27; that stretch reads MAGWPGAGPLCVLGGAALGVCLAGVAG. The Extracellular portion of the chain corresponds to 28–57; that stretch reads QLVEPSTAPPKPKPPPLTKETVVFWDMRLW. A helical transmembrane segment spans residues 58–78; the sequence is HVVGIFSLFVLSIIITLCCVF. The Cytoplasmic segment spans residues 79-156; that stretch reads NCRVPRTRKE…NEAKKKKGEK (78 aa). The segment at 113–135 is disordered; the sequence is NELTEVPGEDKKKKKKKKKDSVD.

As to quaternary structure, forms the MET channel composed of TMC (TMC1 or TMC2), TMIE, TOMT, CIB (CIB2 or CIB3), LHPL5 and PCDH15. As to expression, expressed in many tissues.

The protein localises to the membrane. Auxiliary subunit of the mechanotransducer (MET) non-specific cation channel complex located at the tips of stereocilia of cochlear hair cells and that mediates sensory transduction in the auditory system. The MET complex is composed of two dimeric pore-forming ion-conducting transmembrane TMC (TMC1 or TMC2) subunits, and aided by several auxiliary proteins including LHFPL5, TMIE, CIB2/3 and TOMT, and the tip-link PCDH15. May contribute to the formation of the pore. The chain is Transmembrane inner ear expressed protein (TMIE) from Homo sapiens (Human).